The following is a 301-amino-acid chain: Glutamine amidotransferase-like protein GlxB (301 aa).

Residue Cys-2 is part of the active site. A Glutamine amidotransferase type-2 domain is found at 2 to 298; the sequence is CGIVGLFLKD…PATVYFWDHQ (297 aa).

This Rhizobium meliloti (strain 1021) (Ensifer meliloti) protein is Glutamine amidotransferase-like protein GlxB (glxB).